Here is a 295-residue protein sequence, read N- to C-terminus: (R)-phenoxypropionate/alpha-ketoglutarate-dioxygenase (295 aa).

Fe cation contacts are provided by H111 and D113. Positions 138 and 255 each coordinate 2-oxoglutarate. Position 270 (H270) interacts with Fe cation. R281 contributes to the 2-oxoglutarate binding site.

It belongs to the TfdA dioxygenase family. As to quaternary structure, homotrimer. Requires Fe cation as cofactor. The cofactor is L-ascorbate.

It carries out the reaction (R)-2-(4-chloro-2-methylphenoxy)propanoate + 2-oxoglutarate + O2 = 2-methyl-4-chlorophenol + pyruvate + succinate + CO2. The enzyme catalyses (R)-(2,4-dichlorophenoxy)propanoate + 2-oxoglutarate + O2 = 2,4-dichlorophenol + pyruvate + succinate + CO2. Its pathway is xenobiotic degradation; 2-(2,4-dichlorophenoxy)propanoate degradation. Inhibited by divalent cations, most significantly by copper and nickel, and by diethylpyrocarbonate (DEPC). Involved in the degradation of the phenoxypropionate herbicides. Catalyzes the enantiospecific cleavage of the ether bond in the herbicid R-dichlorprop ((R)-2-(2,4-dichlorophenoxy)propionate)(R-2,4-DP) and R-mecoprop ((R)-2-(4-chloro-2-methylphenoxy)propionate)(R-2,4-MCPP). It can also accept (RS)-2-(2,4,5-trichlorophenoxy)propionate, (RS)-2-(4-chlorophenoxy)propionate, (RS)-2-(m-chlorophenoxy)propionate, however it can only accept 2-oxoglutarate as oxygen acceptor. The protein is (R)-phenoxypropionate/alpha-ketoglutarate-dioxygenase of Delftia acidovorans (Pseudomonas acidovorans).